The sequence spans 170 residues: Ribosome maturation factor RimP (170 aa).

Belongs to the RimP family.

It is found in the cytoplasm. Required for maturation of 30S ribosomal subunits. This is Ribosome maturation factor RimP from Acidothermus cellulolyticus (strain ATCC 43068 / DSM 8971 / 11B).